Reading from the N-terminus, the 228-residue chain is MTARRAPAVNRDVLERMLVDGAASLDVALSDTQRNRLLDYVALLGKWNAVYNLTAIRDPQQMLIQHILDSLSIVPHLRGRASARVLDVGSGGGLPGLVLAIVEPDWQVTLNDIVQKKSAFQTQTRAELKLTNLSVVTGRVETLRPGVEVPEKFDIIVSRAFADLSDFVKLARHLVAPGGSIWAMKGVHPDDEIARLPEGSRVKQTMRLAVPMLDAERHLIEVAVDEAI.

Residues G89, L94, V140–E141, and R159 contribute to the S-adenosyl-L-methionine site.

It belongs to the methyltransferase superfamily. RNA methyltransferase RsmG family.

The protein resides in the cytoplasm. It carries out the reaction guanosine(527) in 16S rRNA + S-adenosyl-L-methionine = N(7)-methylguanosine(527) in 16S rRNA + S-adenosyl-L-homocysteine. Functionally, specifically methylates the N7 position of guanine in position 527 of 16S rRNA. This Burkholderia multivorans (strain ATCC 17616 / 249) protein is Ribosomal RNA small subunit methyltransferase G.